The chain runs to 801 residues: Sucrose synthase isoform 2 (801 aa).

Residues methionine 271–threonine 748 are GT-B glycosyltransferase.

This sequence belongs to the glycosyltransferase 1 family. Plant sucrose synthase subfamily. In terms of assembly, homotetramer. In terms of tissue distribution, exclusively expressed in flowers.

The enzyme catalyses an NDP-alpha-D-glucose + D-fructose = a ribonucleoside 5'-diphosphate + sucrose + H(+). In terms of biological role, sucrose-cleaving enzyme that provides UDP-glucose and fructose for various metabolic pathways. In Daucus carota (Wild carrot), this protein is Sucrose synthase isoform 2.